Reading from the N-terminus, the 468-residue chain is DNA polymerase IV 1 (468 aa).

Residues 6–188 (VLHLDMDAFF…LPVRRLWGIG (183 aa)) form the UmuC domain. Mg(2+) is bound by residues Asp10 and Asp105. Residue Glu106 is part of the active site.

It belongs to the DNA polymerase type-Y family. Monomer. The cofactor is Mg(2+).

Its subcellular location is the cytoplasm. It carries out the reaction DNA(n) + a 2'-deoxyribonucleoside 5'-triphosphate = DNA(n+1) + diphosphate. In terms of biological role, poorly processive, error-prone DNA polymerase involved in untargeted mutagenesis. Copies undamaged DNA at stalled replication forks, which arise in vivo from mismatched or misaligned primer ends. These misaligned primers can be extended by PolIV. Exhibits no 3'-5' exonuclease (proofreading) activity. May be involved in translesional synthesis, in conjunction with the beta clamp from PolIII. The chain is DNA polymerase IV 1 (dinB1) from Mycobacterium tuberculosis (strain CDC 1551 / Oshkosh).